The primary structure comprises 212 residues: Probable GTP-binding protein EngB (212 aa).

Residues 22-212 (GVSEFAFFGR…NILSLIAKRI (191 aa)) form the EngB-type G domain. GTP-binding positions include 30–37 (GRSNAGKS), 57–61 (GMTRE), 95–98 (DLPG), 162–165 (TKAD), and 192–195 (ISSA). Residues serine 37 and threonine 59 each contribute to the Mg(2+) site.

The protein belongs to the TRAFAC class TrmE-Era-EngA-EngB-Septin-like GTPase superfamily. EngB GTPase family. Mg(2+) serves as cofactor.

Its function is as follows. Necessary for normal cell division and for the maintenance of normal septation. This chain is Probable GTP-binding protein EngB, found in Treponema denticola (strain ATCC 35405 / DSM 14222 / CIP 103919 / JCM 8153 / KCTC 15104).